The primary structure comprises 235 residues: MNMSTATTTHSCVPILVFPSYWASFSCCWWTRLVTPMCILLTPTQCEDDEDENLYDDPLLLNNPEAARSSNSKTTTTLGLVVHAAADGVALGAAASTSQTSVQLIVFVAIMLHKAPAAFGLVSFLMHAGLERNRIRKHLLVFSLAAPVMSMVTYLGLSKSSKEALSEVNATGMAMLFSAGTFLYVATVHVLPEVGGIGHSHKPDATGGRGLSRLEVAALVLGCLIPLILSVGHQH.

The N-linked (GlcNAc...) asparagine glycan is linked to Asn2. A run of 4 helical transmembrane segments spans residues 11–31 (SCVP…CWWT), 75–95 (TTTL…GAAA), 104–124 (LIVF…LVSF), and 138–158 (HLLV…LGLS). N-linked (GlcNAc...) asparagine glycosylation occurs at Asn169. 2 consecutive transmembrane segments (helical) span residues 172–192 (GMAM…HVLP) and 214–234 (LEVA…VGHQ).

This sequence belongs to the ZIP transporter (TC 2.A.5) family.

It is found in the golgi apparatus. The protein resides in the trans-Golgi network membrane. Its subcellular location is the cell membrane. It localises to the cytoplasm. The protein localises to the perinuclear region. It is found in the mitochondrion. The protein resides in the nucleus. It catalyses the reaction Zn(2+)(in) = Zn(2+)(out). Transports zinc ions across cell and organelle membranes into the cytoplasm and regulates intracellular zinc homeostasis. Participates in the zinc ions efflux out of the secretory compartments. Regulates intracellular zinc level, resulting in the enhancement of AKT1 and MAPK3/MAPK1 (Erk1/2) phosphorylation in response to the BCR activation. Also functions as a membrane androgen receptor that mediates, through a G protein, the non-classical androgen signaling pathway, characterized by the activation of MAPK3/MAPK1 (Erk1/2) and transcription factors CREB1 or ATF1. This pathway contributes to CLDN1 and CLDN5 expression and tight junction formation between adjacent Sertoli cells. Mediates androgen-induced vascular endothelial cell proliferation through activation of an inhibitory G protein leading to the AKT1 and MAPK3/MAPK1 (Erk1/2) activation which in turn modulate inhibition (phosphorylation) of GSK3B and CCND1 transcription. Moreover, has dual functions as a membrane-bound androgen receptor and as an androgen-dependent zinc transporter both of which are mediated through an inhibitory G protein (Gi) that mediates both MAP kinase and zinc signaling leading to the androgen-dependent apoptotic process. This Macaca fascicularis (Crab-eating macaque) protein is Zinc transporter ZIP9.